We begin with the raw amino-acid sequence, 164 residues long: Phosphopantetheine adenylyltransferase (164 aa).

Residue Ser9 coordinates substrate. Residues 9–10 (SF) and His17 contribute to the ATP site. The substrate site is built by Lys41, Val78, and Arg92. Residues 93 to 95 (GLR), Glu103, and 128 to 134 (SRPITAT) each bind ATP.

It belongs to the bacterial CoaD family. In terms of assembly, homohexamer. Mg(2+) serves as cofactor.

It localises to the cytoplasm. The catalysed reaction is (R)-4'-phosphopantetheine + ATP + H(+) = 3'-dephospho-CoA + diphosphate. The protein operates within cofactor biosynthesis; coenzyme A biosynthesis; CoA from (R)-pantothenate: step 4/5. Functionally, reversibly transfers an adenylyl group from ATP to 4'-phosphopantetheine, yielding dephospho-CoA (dPCoA) and pyrophosphate. The protein is Phosphopantetheine adenylyltransferase of Agrobacterium fabrum (strain C58 / ATCC 33970) (Agrobacterium tumefaciens (strain C58)).